The primary structure comprises 432 residues: Enolase (432 aa).

Residues 41–64 (QVPSGASTGSFEAHELRDGDPKRY) are disordered. The span at 52 to 64 (EAHELRDGDPKRY) shows a compositional bias: basic and acidic residues. Gln-168 lines the (2R)-2-phosphoglycerate pocket. The active-site Proton donor is Glu-211. 3 residues coordinate Mg(2+): Asp-248, Glu-289, and Asp-316. Residues Lys-341, Arg-370, Ser-371, and Lys-392 each coordinate (2R)-2-phosphoglycerate. Lys-341 acts as the Proton acceptor in catalysis.

It belongs to the enolase family. Mg(2+) is required as a cofactor.

It localises to the cytoplasm. The protein resides in the secreted. Its subcellular location is the cell surface. The catalysed reaction is (2R)-2-phosphoglycerate = phosphoenolpyruvate + H2O. It functions in the pathway carbohydrate degradation; glycolysis; pyruvate from D-glyceraldehyde 3-phosphate: step 4/5. Its function is as follows. Catalyzes the reversible conversion of 2-phosphoglycerate (2-PG) into phosphoenolpyruvate (PEP). It is essential for the degradation of carbohydrates via glycolysis. The polypeptide is Enolase (Synechocystis sp. (strain ATCC 27184 / PCC 6803 / Kazusa)).